The sequence spans 470 residues: Poly(A) polymerase catalytic subunit (470 aa).

Residues Asp-192 and Asp-194 contribute to the active site.

The protein belongs to the poxviridae poly(A) polymerase catalytic subunit family. As to quaternary structure, heterodimer of a large (catalytic) subunit and a small (regulatory) subunit.

The enzyme catalyses RNA(n) + ATP = RNA(n)-3'-adenine ribonucleotide + diphosphate. Functionally, polymerase that creates the 3'-poly(A) tail of mRNA's. The protein is Poly(A) polymerase catalytic subunit (PAPL) of Oryctolagus cuniculus (Rabbit).